We begin with the raw amino-acid sequence, 264 residues long: MSQVRSDKPFTLAGRTYQSRLLVGTGKYKDMDETRDAIAASGAEIVTVAVRRTNIGQNPGEPNLLDVISPEQYTILPNTAGCYDAAEAVRTCRLARELLDGHKLVKLEVLADQKTLFPNVIETIKAAEILVKDGFDVMVYTSDDPIIARQLAEIGCIAVMPLAGLIGSGLGICNPYNLRIILEEAKVPVLVDAGVGTASDATIAMELGCEAVLLNSAIAHAQDPILMARAMKHAVEAGRLAYLAGRMPKKLYASASSPLDGLIK.

The Schiff-base intermediate with DXP role is filled by Lys-106. 1-deoxy-D-xylulose 5-phosphate is bound by residues Gly-167, 193–194, and 215–216; these read AG and NS.

The protein belongs to the ThiG family. In terms of assembly, homotetramer. Forms heterodimers with either ThiH or ThiS.

The protein localises to the cytoplasm. The enzyme catalyses [ThiS sulfur-carrier protein]-C-terminal-Gly-aminoethanethioate + 2-iminoacetate + 1-deoxy-D-xylulose 5-phosphate = [ThiS sulfur-carrier protein]-C-terminal Gly-Gly + 2-[(2R,5Z)-2-carboxy-4-methylthiazol-5(2H)-ylidene]ethyl phosphate + 2 H2O + H(+). The protein operates within cofactor biosynthesis; thiamine diphosphate biosynthesis. In terms of biological role, catalyzes the rearrangement of 1-deoxy-D-xylulose 5-phosphate (DXP) to produce the thiazole phosphate moiety of thiamine. Sulfur is provided by the thiocarboxylate moiety of the carrier protein ThiS. In vitro, sulfur can be provided by H(2)S. The sequence is that of Thiazole synthase from Ectopseudomonas mendocina (strain ymp) (Pseudomonas mendocina).